Here is a 235-residue protein sequence, read N- to C-terminus: uncharacterized protein (235 aa).

This is an uncharacterized protein from Salmonella typhimurium (strain LT2 / SGSC1412 / ATCC 700720).